The following is a 366-amino-acid chain: UDP-N-acetylglucosamine--N-acetylmuramyl-(pentapeptide) pyrophosphoryl-undecaprenol N-acetylglucosamine transferase (366 aa).

UDP-N-acetyl-alpha-D-glucosamine-binding positions include 17–19 (TGG), Asn129, Arg169, Ser195, Ile251, 270–275 (ALTVSE), and Gln296.

This sequence belongs to the glycosyltransferase 28 family. MurG subfamily.

Its subcellular location is the cell inner membrane. It catalyses the reaction di-trans,octa-cis-undecaprenyl diphospho-N-acetyl-alpha-D-muramoyl-L-alanyl-D-glutamyl-meso-2,6-diaminopimeloyl-D-alanyl-D-alanine + UDP-N-acetyl-alpha-D-glucosamine = di-trans,octa-cis-undecaprenyl diphospho-[N-acetyl-alpha-D-glucosaminyl-(1-&gt;4)]-N-acetyl-alpha-D-muramoyl-L-alanyl-D-glutamyl-meso-2,6-diaminopimeloyl-D-alanyl-D-alanine + UDP + H(+). It functions in the pathway cell wall biogenesis; peptidoglycan biosynthesis. Functionally, cell wall formation. Catalyzes the transfer of a GlcNAc subunit on undecaprenyl-pyrophosphoryl-MurNAc-pentapeptide (lipid intermediate I) to form undecaprenyl-pyrophosphoryl-MurNAc-(pentapeptide)GlcNAc (lipid intermediate II). The polypeptide is UDP-N-acetylglucosamine--N-acetylmuramyl-(pentapeptide) pyrophosphoryl-undecaprenol N-acetylglucosamine transferase (Shewanella denitrificans (strain OS217 / ATCC BAA-1090 / DSM 15013)).